The following is a 212-amino-acid chain: Probable GTP-binding protein EngB (212 aa).

An EngB-type G domain is found at 27-211; it reads GPPEIAFAGR…QAAIVLAANG (185 aa). Residues 35 to 42, 62 to 66, 89 to 92, 156 to 159, and 190 to 192 contribute to the GTP site; these read GRSNVGKS, GRTQE, DMPG, TKTD, and TSS. Mg(2+) is bound by residues serine 42 and threonine 64.

It belongs to the TRAFAC class TrmE-Era-EngA-EngB-Septin-like GTPase superfamily. EngB GTPase family. The cofactor is Mg(2+).

Its function is as follows. Necessary for normal cell division and for the maintenance of normal septation. This is Probable GTP-binding protein EngB from Mesorhizobium japonicum (strain LMG 29417 / CECT 9101 / MAFF 303099) (Mesorhizobium loti (strain MAFF 303099)).